The primary structure comprises 249 residues: Ribosomal RNA small subunit methyltransferase J (249 aa).

S-adenosyl-L-methionine-binding positions include 101 to 102 (RD), 117 to 118 (ER), and Asp-171.

This sequence belongs to the methyltransferase superfamily. RsmJ family.

Its subcellular location is the cytoplasm. It carries out the reaction guanosine(1516) in 16S rRNA + S-adenosyl-L-methionine = N(2)-methylguanosine(1516) in 16S rRNA + S-adenosyl-L-homocysteine + H(+). Functionally, specifically methylates the guanosine in position 1516 of 16S rRNA. In Tolumonas auensis (strain DSM 9187 / NBRC 110442 / TA 4), this protein is Ribosomal RNA small subunit methyltransferase J.